We begin with the raw amino-acid sequence, 175 residues long: Adenine phosphoribosyltransferase (175 aa).

Belongs to the purine/pyrimidine phosphoribosyltransferase family. As to quaternary structure, homodimer.

It is found in the cytoplasm. It carries out the reaction AMP + diphosphate = 5-phospho-alpha-D-ribose 1-diphosphate + adenine. It functions in the pathway purine metabolism; AMP biosynthesis via salvage pathway; AMP from adenine: step 1/1. Its function is as follows. Catalyzes a salvage reaction resulting in the formation of AMP, that is energically less costly than de novo synthesis. This chain is Adenine phosphoribosyltransferase, found in Synechococcus sp. (strain JA-3-3Ab) (Cyanobacteria bacterium Yellowstone A-Prime).